Reading from the N-terminus, the 151-residue chain is Putative coiled-coil-helix-coiled-coil-helix domain-containing protein CHCHD2P9, mitochondrial (151 aa).

The N-terminal 9 residues, 1–9 (MPRGSRSRT), are a transit peptide targeting the mitochondrion. Disordered regions lie at residues 1–50 (MPRG…AAAP) and 75–110 (TQGH…PAQQ). A compositionally biased stretch (low complexity) spans 10–26 (SRMAPPASRAPQMRAAP). Residues 27 to 38 (RPAPVAQPPAAA) are compositionally biased toward pro residues. Low complexity-rich tracts occupy residues 39 to 50 (PPSAVGSSAAAP) and 100 to 110 (QEPQGTQPAQQ). The region spanning 111–151 (QQPCFYGIKQFLECAQNQGDIKLCEDFSKVLKQCRLAKGLA) is the CHCH domain. Short sequence motifs (cx9C motif) lie at residues 114 to 124 (CFYGIKQFLEC) and 134 to 144 (CEDFSKVLKQC). 2 disulfide bridges follow: C114-C144 and C124-C134.

It is found in the mitochondrion. The polypeptide is Putative coiled-coil-helix-coiled-coil-helix domain-containing protein CHCHD2P9, mitochondrial (CHCHD2P9) (Homo sapiens (Human)).